A 213-amino-acid chain; its full sequence is Uridine kinase (213 aa).

14–21 (GASASGKS) is a binding site for ATP.

It belongs to the uridine kinase family.

It localises to the cytoplasm. The catalysed reaction is uridine + ATP = UMP + ADP + H(+). The enzyme catalyses cytidine + ATP = CMP + ADP + H(+). It functions in the pathway pyrimidine metabolism; CTP biosynthesis via salvage pathway; CTP from cytidine: step 1/3. The protein operates within pyrimidine metabolism; UMP biosynthesis via salvage pathway; UMP from uridine: step 1/1. The protein is Uridine kinase of Vibrio atlanticus (strain LGP32) (Vibrio splendidus (strain Mel32)).